The sequence spans 709 residues: UV-stimulated scaffold protein A (709 aa).

A compositionally biased stretch (basic and acidic residues) spans 1-10 (MDQKLSKLVE). The tract at residues 1–20 (MDQKLSKLVEELTTSGEPRL) is disordered. Residues 2–145 (DQKLSKLVEE…HFLRHNKKVD (144 aa)) are VHS-like. Residues 165–199 (KHLDKIYQERASQAEREMQEMSGEIESCLTEVESC) are a coiled coil. Disordered stretches follow at residues 230–289 (SCAG…DSDL) and 386–406 (EGGERRRTEALGDAEEDEDDE). Residues 280–289 (PSDEDEDSDL) show a composition bias toward acidic residues. 2 positions are modified to phosphoserine: Ser281 and Ser287. A compositionally biased stretch (basic and acidic residues) spans 386–395 (EGGERRRTEA). Positions 397–406 (GDAEEDEDDE) are enriched in acidic residues. Lys414 is covalently cross-linked (Glycyl lysine isopeptide (Lys-Gly) (interchain with G-Cter in ubiquitin)). Residues 469–495 (DHLPPPSSASPSRALPEPQEAQKLAAE) form a disordered region. Residues 477–486 (ASPSRALPEP) show a composition bias toward low complexity. A UVSSA-type zinc finger spans residues 564–591 (QHWCRAPRPDGRLCERQDRLKCPFHGKI). Residues Cys567, Cys577, Cys585, and His588 each coordinate Zn(2+). The tract at residues 588–655 (HGKIVPRDDE…GKGRGKKRRY (68 aa)) is disordered. A compositionally biased stretch (basic and acidic residues) spans 592–632 (VPRDDEGRPLDPEDRAREQRRQLQKQERPEWQDPELMRDVE). The segment covering 646-655 (GKGRGKKRRY) has biased composition (basic residues).

This sequence belongs to the UVSSA family. Interacts with the elongating form of RNA polymerase II (RNA pol IIo) during transcription stress. Interacts with the TFIIH complex during transcription stress. Interacts with ERCC6. Interacts with ERCC8. Interacts with USP7. In terms of processing, monoubiquitinated at Lys-414 in response to transcription stress; this promotes efficient transfer of TFIIH to stalled RNA polymerase II.

The protein resides in the chromosome. In terms of biological role, factor involved in transcription-coupled nucleotide excision repair (TC-NER), a mechanism that rapidly removes RNA polymerase II-blocking lesions from the transcribed strand of active genes. Acts as a key adapter that promotes recruitment of factors involved in TC-NER. Facilitates the ubiquitination of the elongating form of RNA polymerase II (RNA pol IIo) at DNA damage sites, thereby promoting RNA pol IIo backtracking and access by the TC-NER machinery to lesion sites. Also promotes stabilization of ERCC6/CSB by recruiting deubiquitinating enzyme USP7 to TC-NER complexes, preventing UV-induced degradation of ERCC6 by the proteasome. Mediates the recruitment of the TFIIH complex and other factors that are required for nucleotide excision repair to RNA polymerase II. Also required to inactivate stalled RNA polymerase II by blocking the access of TCEA1/TFIIS, thereby preventing reactivation of RNA polymerase II. Not involved in processing oxidative damage. In Homo sapiens (Human), this protein is UV-stimulated scaffold protein A.